The sequence spans 255 residues: MSIKVIVAGFKGRMGSTAVEMVKGDDELTLAALLDPFAAEKEVDGVPVFTDKADLVGFDADVWVDFTIPAVAYENTRFALENGFAPVVGTTGFTEAQIQKLTDLSKDKSIGGLIAPNFAIGAILLMKFAAEASKYFPDLEIIELHHDKKKDAPSGTAVKTAELIREVRESKRQGAEDEMETLAGARGAEFDGFRIHSVRLPGLVAHQEVIFGAQGEGLTLRHDSYDRISFMSGVNLGIKEVVKRDQLVYGLEHLL.

NAD(+) contacts are provided by residues 9–14 (GFKGRM), 89–91 (GTT), and 115–118 (APNF). H145 acts as the Proton donor/acceptor in catalysis. A (S)-2,3,4,5-tetrahydrodipicolinate-binding site is contributed by H146. The active-site Proton donor is the K149. 155–156 (GT) serves as a coordination point for (S)-2,3,4,5-tetrahydrodipicolinate.

This sequence belongs to the DapB family.

The protein localises to the cytoplasm. The enzyme catalyses (S)-2,3,4,5-tetrahydrodipicolinate + NAD(+) + H2O = (2S,4S)-4-hydroxy-2,3,4,5-tetrahydrodipicolinate + NADH + H(+). The catalysed reaction is (S)-2,3,4,5-tetrahydrodipicolinate + NADP(+) + H2O = (2S,4S)-4-hydroxy-2,3,4,5-tetrahydrodipicolinate + NADPH + H(+). Its pathway is amino-acid biosynthesis; L-lysine biosynthesis via DAP pathway; (S)-tetrahydrodipicolinate from L-aspartate: step 4/4. In terms of biological role, catalyzes the conversion of 4-hydroxy-tetrahydrodipicolinate (HTPA) to tetrahydrodipicolinate. The sequence is that of 4-hydroxy-tetrahydrodipicolinate reductase from Streptococcus thermophilus (strain CNRZ 1066).